We begin with the raw amino-acid sequence, 595 residues long: Chaperone protein HscA homolog (595 aa).

It belongs to the heat shock protein 70 family.

In terms of biological role, chaperone involved in the maturation of iron-sulfur cluster-containing proteins. Has a low intrinsic ATPase activity which is markedly stimulated by HscB. This is Chaperone protein HscA homolog from Rickettsia akari (strain Hartford).